The following is a 180-amino-acid chain: Ribulose bisphosphate carboxylase small subunit, chloroplastic 3 (180 aa).

The transit peptide at 1–56 directs the protein to the chloroplast; that stretch reads MASMISSSAVTTVSRASTVQSAAVAPFGGLKSMTGFPVKKVNTDITSITSNGGRVK.

The protein belongs to the RuBisCO small chain family. As to quaternary structure, heterohexadecamer of 8 large and 8 small subunits.

Its subcellular location is the plastid. The protein resides in the chloroplast. In terms of biological role, ruBisCO catalyzes two reactions: the carboxylation of D-ribulose 1,5-bisphosphate, the primary event in carbon dioxide fixation, as well as the oxidative fragmentation of the pentose substrate. Both reactions occur simultaneously and in competition at the same active site. Although the small subunit is not catalytic it is essential for maximal activity. Binds to abscisic acid (ABA); only half of the possible binding sites are occupied in the crystal; and there are indications this is a low affinity site. This is Ribulose bisphosphate carboxylase small subunit, chloroplastic 3 (RBCS.3A) from Pisum sativum (Garden pea).